The following is a 143-amino-acid chain: UPF0251 protein Rru_A1194 (143 aa).

A disordered region spans residues 100 to 143 (LDGSACPNRRQRRGPCARRGAAGALARQTGDEPPSSPTDNEKDD). Residues 116–126 (ARRGAAGALAR) show a composition bias toward low complexity.

This sequence belongs to the UPF0251 family.

The protein is UPF0251 protein Rru_A1194 of Rhodospirillum rubrum (strain ATCC 11170 / ATH 1.1.1 / DSM 467 / LMG 4362 / NCIMB 8255 / S1).